Here is a 421-residue protein sequence, read N- to C-terminus: Medium-chain specific acyl-CoA dehydrogenase, mitochondrial (421 aa).

The transit peptide at Met-1–Ser-25 directs the protein to the mitochondrion. Residues Lys-30 and Lys-69 each carry the N6-acetyllysine; alternate modification. Lys-30 and Lys-69 each carry N6-succinyllysine; alternate. Lys-79 carries the post-translational modification N6-acetyllysine. Tyr-158 to Ser-167 lines the FAD pocket. Position 167 (Ser-167) interacts with octanoyl-CoA. An N6-succinyllysine modification is found at Lys-179. Trp-191–Thr-193 is a binding site for FAD. Residue Lys-212 is modified to N6-acetyllysine; alternate. Position 212 is an N6-succinyllysine; alternate (Lys-212). Residue Ser-216 participates in octanoyl-CoA binding. 4 positions are modified to N6-acetyllysine; alternate: Lys-217, Lys-235, Lys-259, and Lys-271. N6-succinyllysine; alternate occurs at positions 217, 235, 259, and 271. Positions 278 and 281 each coordinate octanoyl-CoA. Lys-301 is subject to N6-acetyllysine. FAD-binding positions include Arg-306–Thr-308 and His-316–Gln-317. Positions 349 and 351 each coordinate octanoyl-CoA. A Phosphothreonine modification is found at Thr-351. FAD is bound at residue Gln-374 to Gly-378. Glu-401 lines the octanoyl-CoA pocket. Residue Glu-401 is the Proton acceptor of the active site. Gly-402–Gln-405 serves as a coordination point for FAD.

It belongs to the acyl-CoA dehydrogenase family. In terms of assembly, homotetramer. Interacts with the heterodimeric electron transfer flavoprotein ETF. It depends on FAD as a cofactor. In terms of processing, acetylated. Could occur at proximity of the cofactor-binding sites and reduce the catalytic activity. Could be deacetylated by SIRT3.

It localises to the mitochondrion matrix. It catalyses the reaction a medium-chain 2,3-saturated fatty acyl-CoA + oxidized [electron-transfer flavoprotein] + H(+) = a medium-chain (2E)-enoyl-CoA + reduced [electron-transfer flavoprotein]. The catalysed reaction is pentanoyl-CoA + oxidized [electron-transfer flavoprotein] + H(+) = (2E)-pentenoyl-CoA + reduced [electron-transfer flavoprotein]. The enzyme catalyses hexanoyl-CoA + oxidized [electron-transfer flavoprotein] + H(+) = (2E)-hexenoyl-CoA + reduced [electron-transfer flavoprotein]. It carries out the reaction octanoyl-CoA + oxidized [electron-transfer flavoprotein] + H(+) = (2E)-octenoyl-CoA + reduced [electron-transfer flavoprotein]. It catalyses the reaction decanoyl-CoA + oxidized [electron-transfer flavoprotein] + H(+) = (2E)-decenoyl-CoA + reduced [electron-transfer flavoprotein]. The catalysed reaction is dodecanoyl-CoA + oxidized [electron-transfer flavoprotein] + H(+) = (2E)-dodecenoyl-CoA + reduced [electron-transfer flavoprotein]. The enzyme catalyses tetradecanoyl-CoA + oxidized [electron-transfer flavoprotein] + H(+) = (2E)-tetradecenoyl-CoA + reduced [electron-transfer flavoprotein]. It carries out the reaction oxidized [electron-transfer flavoprotein] + hexadecanoyl-CoA + H(+) = (2E)-hexadecenoyl-CoA + reduced [electron-transfer flavoprotein]. The protein operates within lipid metabolism; mitochondrial fatty acid beta-oxidation. In terms of biological role, medium-chain specific acyl-CoA dehydrogenase is one of the acyl-CoA dehydrogenases that catalyze the first step of mitochondrial fatty acid beta-oxidation, an aerobic process breaking down fatty acids into acetyl-CoA and allowing the production of energy from fats. The first step of fatty acid beta-oxidation consists in the removal of one hydrogen from C-2 and C-3 of the straight-chain fatty acyl-CoA thioester, resulting in the formation of trans-2-enoyl-CoA. Electron transfer flavoprotein (ETF) is the electron acceptor that transfers electrons to the main mitochondrial respiratory chain via ETF-ubiquinone oxidoreductase (ETF dehydrogenase). Among the different mitochondrial acyl-CoA dehydrogenases, medium-chain specific acyl-CoA dehydrogenase acts specifically on acyl-CoAs with saturated 6 to 12 carbons long primary chains. The chain is Medium-chain specific acyl-CoA dehydrogenase, mitochondrial from Mus musculus (Mouse).